An 81-amino-acid chain; its full sequence is uncharacterized protein (81 aa).

2 consecutive transmembrane segments (helical) span residues 4 to 24 and 61 to 81; these read IFKM…FNYT and NIYT…LHII.

It localises to the cell membrane. This is an uncharacterized protein from Bacillus subtilis (strain 168).